Here is a 413-residue protein sequence, read N- to C-terminus: Serine/threonine-protein kinase ppk27 (413 aa).

The Protein kinase domain maps to 102–403 (WSINTKITST…LKDFNKHGNF (302 aa)). ATP-binding positions include 108-116 (ITSTEQREV) and lysine 133. Aspartate 231 functions as the Proton acceptor in the catalytic mechanism.

Belongs to the protein kinase superfamily. Ser/Thr protein kinase family.

It is found in the cytoplasm. The enzyme catalyses L-seryl-[protein] + ATP = O-phospho-L-seryl-[protein] + ADP + H(+). It carries out the reaction L-threonyl-[protein] + ATP = O-phospho-L-threonyl-[protein] + ADP + H(+). The protein is Serine/threonine-protein kinase ppk27 (ppk27) of Schizosaccharomyces pombe (strain 972 / ATCC 24843) (Fission yeast).